The sequence spans 366 residues: Phospho-N-acetylmuramoyl-pentapeptide-transferase (366 aa).

Transmembrane regions (helical) follow at residues 27–47 (AAMFTAALIVFLFGPKIIASL), 71–91 (TPTMGGLMILAGIVGSSLLWA), 93–113 (LSNVYVVATLLVTLGFGAIGF), 134–154 (LAIEFLIAGIAVFFMMEAAKI), 174–194 (ALLNVGYFFIVFGGFVIVSAG), 205–225 (GLAIVPVMIASAAFGLIAYLA), 245–265 (LAVILGSVIGAGLGFLWFNAP), 268–288 (AIFMGDTGSLALGGLIGTVAV), 294–314 (IVMVIIGGLFVMETLSVIIQV), and 343–363 (QVVIRFWIIAVGLAMLGLATL).

Belongs to the glycosyltransferase 4 family. MraY subfamily. Requires Mg(2+) as cofactor.

It localises to the cell inner membrane. It carries out the reaction UDP-N-acetyl-alpha-D-muramoyl-L-alanyl-gamma-D-glutamyl-meso-2,6-diaminopimeloyl-D-alanyl-D-alanine + di-trans,octa-cis-undecaprenyl phosphate = di-trans,octa-cis-undecaprenyl diphospho-N-acetyl-alpha-D-muramoyl-L-alanyl-D-glutamyl-meso-2,6-diaminopimeloyl-D-alanyl-D-alanine + UMP. The protein operates within cell wall biogenesis; peptidoglycan biosynthesis. Catalyzes the initial step of the lipid cycle reactions in the biosynthesis of the cell wall peptidoglycan: transfers peptidoglycan precursor phospho-MurNAc-pentapeptide from UDP-MurNAc-pentapeptide onto the lipid carrier undecaprenyl phosphate, yielding undecaprenyl-pyrophosphoryl-MurNAc-pentapeptide, known as lipid I. This chain is Phospho-N-acetylmuramoyl-pentapeptide-transferase, found in Allorhizobium ampelinum (strain ATCC BAA-846 / DSM 112012 / S4) (Agrobacterium vitis (strain S4)).